The sequence spans 236 residues: 2-C-methyl-D-erythritol 4-phosphate cytidylyltransferase (236 aa).

Belongs to the IspD/TarI cytidylyltransferase family. IspD subfamily. In terms of assembly, homodimer.

It carries out the reaction 2-C-methyl-D-erythritol 4-phosphate + CTP + H(+) = 4-CDP-2-C-methyl-D-erythritol + diphosphate. It functions in the pathway isoprenoid biosynthesis; isopentenyl diphosphate biosynthesis via DXP pathway; isopentenyl diphosphate from 1-deoxy-D-xylulose 5-phosphate: step 2/6. In terms of biological role, catalyzes the formation of 4-diphosphocytidyl-2-C-methyl-D-erythritol from CTP and 2-C-methyl-D-erythritol 4-phosphate (MEP). The protein is 2-C-methyl-D-erythritol 4-phosphate cytidylyltransferase of Shigella flexneri serotype 5b (strain 8401).